The primary structure comprises 491 residues: Katanin p60 ATPase-containing subunit A1 (491 aa).

The interval 1–29 is interaction with KATNB1; that stretch reads MSLQMIVENVKLAREYALLGNYDSAMVYY. Positions 1-75 are interaction with dynein and NDEL1; that stretch reads MSLQMIVENV…VKDIMKTLES (75 aa). The tract at residues 1 to 185 is interaction with microtubules; sufficient for microtubule severing activity; it reads MSLQMIVENV…EPEANKFDGT (185 aa). The residue at position 42 (serine 42) is a Phosphoserine; by DYRK2. The interval 101-182 is disordered; it reads PVPVERRPLP…AVTEPEANKF (82 aa). The span at 145–169 shows a compositional bias: basic and acidic residues; that stretch reads HNDRGKAVRSREKKEQSKGREEKNK. ATP is bound at residue 249-256; it reads GPPGTGKT.

The protein belongs to the AAA ATPase family. Katanin p60 subunit A1 subfamily. As to quaternary structure, can homooligomerize into hexameric rings, which may be promoted by interaction with microtubules. Interacts with KATNB1, which may serve as a targeting subunit. Interacts with ASPM; the katanin complex formation KATNA1:KATNB1 is required for the association of ASPM. Interacts with dynein and NDEL1. Associates with the E3 ligase complex containing DYRK2, EDD/UBR5, DDB1 and DCAF1 proteins (EDVP complex). Interacts with KLHL42 (via the kelch domains). Interacts with CUL3; the interaction is enhanced by KLHL42. Interacts with KATNB1 and KATNBL1. Interacts with CAMSAP2 and CAMSAP3; leading to regulate the length of CAMSAP-decorated microtubule stretches. Phosphorylation by DYRK2 triggers ubiquitination and subsequent degradation. Post-translationally, ubiquitinated by the BCR(KLHL42) E3 ubiquitin ligase complex, leading to its proteasomal degradation. Ubiquitinated by the EDVP E3 ligase complex and subsequently targeted for proteasomal degradation.

The protein resides in the cytoplasm. The protein localises to the midbody. It localises to the cytoskeleton. Its subcellular location is the microtubule organizing center. It is found in the centrosome. The protein resides in the spindle pole. The protein localises to the spindle. The enzyme catalyses n ATP + n H2O + a microtubule = n ADP + n phosphate + (n+1) alpha/beta tubulin heterodimers.. With respect to regulation, ATPase activity is stimulated by microtubules, which promote homooligomerization. ATP-dependent microtubule severing is stimulated by interaction with KATNB1. Catalytic subunit of a complex which severs microtubules in an ATP-dependent manner. Microtubule severing may promote rapid reorganization of cellular microtubule arrays and the release of microtubules from the centrosome following nucleation. Microtubule release from the mitotic spindle poles may allow depolymerization of the microtubule end proximal to the spindle pole, leading to poleward microtubule flux and poleward motion of chromosome. The function in regulating microtubule dynamics at spindle poles seems to depend on the association of the katanin KATNA1:KATNB1 complex with ASPM which recruits it to microtubules. Reversely KATNA1:KATNB1 can enhance ASPM blocking activity on microtubule minus-end growth. Microtubule release within the cell body of neurons may be required for their transport into neuronal processes by microtubule-dependent motor proteins. This transport is required for axonal growth. This Mus musculus (Mouse) protein is Katanin p60 ATPase-containing subunit A1 (Katna1).